Here is a 224-residue protein sequence, read N- to C-terminus: Claudin-19 (224 aa).

The Cytoplasmic portion of the chain corresponds to 1 to 7 (MANSGLQ). The chain crosses the membrane as a helical span at residues 8–28 (LLGYFLALGGWVGIIASTALP). The Extracellular segment spans residues 29-81 (QWKQSSYAGDAIITAVGLYEGLWMSCASQSTGQVQCKLYDSLLALDGHIQSAR). C54 and C64 are oxidised to a cystine. Residues 82–102 (ALMVVAVLLGFVAMVLSVVGM) form a helical membrane-spanning segment. Residues 103–117 (KCTRVGDSNPTAKSR) are Cytoplasmic-facing. A helical transmembrane segment spans residues 118-138 (VAISGGALFLLAGLCTLTAVS). Topologically, residues 139–160 (WYATLVTQEFFNPSTPVNARYE) are extracellular. A helical transmembrane segment spans residues 161 to 181 (FGPALFVGWASAGLAMLGGSF). At 182–224 (LCCTCPEPERANSIPQPYRSGPSTAAREPVVKLPASVKGPLGV) the chain is on the cytoplasmic side.

It belongs to the claudin family. As to quaternary structure, can form homo- and heteropolymeric tight junction strands. Interacts with other claudins including CLDN3, CLDN10, CLDN16 and CLDN18 with highest affinity for CLDN16. Interacts (via PDZ-binding motif TRV) with TJP1 (via PDZ domain). In terms of assembly, (Microbial infection) Interacts (via both extracellular domains) with Clostridium perfringens enterotoxin CPE; the interaction disrupts claudin assembly in tight junctions. Expressed in the corticomedullary axis of the TAL, specifically in the cortex and the outer stripe of outer medulla (OSOM) zone (at protein level). Expressed in peripheral nervous system, in Schwan cells (at protein level).

Its subcellular location is the cell junction. It localises to the tight junction. The protein resides in the cell membrane. The catalysed reaction is Mg(2+)(in) = Mg(2+)(out). It catalyses the reaction Ca(2+)(in) = Ca(2+)(out). The enzyme catalyses Na(+)(in) = Na(+)(out). It carries out the reaction K(+)(in) = K(+)(out). The catalysed reaction is Rb(+)(in) = Rb(+)(out). It catalyses the reaction Cs(+)(in) = Cs(+)(out). The enzyme catalyses Li(+)(in) = Li(+)(out). Its function is as follows. Forms paracellular channels: coassembles with CLDN16 into tight junction strands with cation-selective channels through the strands, conveying epithelial permeability in a process known as paracellular tight junction permeability. Involved in the maintenance of ion gradients along the nephron. In the thick ascending limb (TAL) of Henle's loop, facilitates sodium paracellular permeability from the interstitial compartment to the lumen, contributing to the lumen-positive transepithelial potential that drives paracellular magnesium and calcium reabsorption. Forms paracellular barriers on its own. In the peripheral nervous system, represents a major constituent of the tight junctions in Schwann cells and contributes to electrical sealing. During retinal neurogenesis, may regulate the barrier properties of tight junctions in retinal pigment epithelium, required for proper retinal tissue differentiation and vision. This is Claudin-19 from Mus musculus (Mouse).